Consider the following 469-residue polypeptide: DNA-binding transcriptional regulator NtrC (469 aa).

Positions 5–119 constitute a Response regulatory domain; sequence IVWVVDDDSS…EAVALVERAI (115 aa). Position 54 is a 4-aspartylphosphate (Asp54). Residues 140–369 enclose the Sigma-54 factor interaction domain; it reads IIGEAPAMQD…LENTCRWLTV (230 aa). ATP-binding positions include 168 to 175 and 231 to 240; these read GESGTGKE and ADGGTLFLDE. Positions 445–464 form a DNA-binding region, H-T-H motif; it reads KQEAARLLGWGRNTLTRKLK.

Post-translationally, phosphorylated and dephosphorylated by NtrB.

The protein localises to the cytoplasm. Its function is as follows. Member of the two-component regulatory system NtrB/NtrC, which controls expression of the nitrogen-regulated (ntr) genes in response to nitrogen limitation. Phosphorylated NtrC binds directly to DNA and stimulates the formation of open promoter-sigma54-RNA polymerase complexes. In Escherichia coli O157:H7, this protein is DNA-binding transcriptional regulator NtrC (glnG).